The chain runs to 165 residues: Crossover junction endodeoxyribonuclease RuvC (165 aa).

Residues aspartate 7, glutamate 67, and aspartate 140 contribute to the active site. The Mg(2+) site is built by aspartate 7, glutamate 67, and aspartate 140.

The protein belongs to the RuvC family. Homodimer which binds Holliday junction (HJ) DNA. The HJ becomes 2-fold symmetrical on binding to RuvC with unstacked arms; it has a different conformation from HJ DNA in complex with RuvA. In the full resolvosome a probable DNA-RuvA(4)-RuvB(12)-RuvC(2) complex forms which resolves the HJ. Mg(2+) is required as a cofactor.

It is found in the cytoplasm. The enzyme catalyses Endonucleolytic cleavage at a junction such as a reciprocal single-stranded crossover between two homologous DNA duplexes (Holliday junction).. Its function is as follows. The RuvA-RuvB-RuvC complex processes Holliday junction (HJ) DNA during genetic recombination and DNA repair. Endonuclease that resolves HJ intermediates. Cleaves cruciform DNA by making single-stranded nicks across the HJ at symmetrical positions within the homologous arms, yielding a 5'-phosphate and a 3'-hydroxyl group; requires a central core of homology in the junction. The consensus cleavage sequence is 5'-(A/T)TT(C/G)-3'. Cleavage occurs on the 3'-side of the TT dinucleotide at the point of strand exchange. HJ branch migration catalyzed by RuvA-RuvB allows RuvC to scan DNA until it finds its consensus sequence, where it cleaves and resolves the cruciform DNA. The chain is Crossover junction endodeoxyribonuclease RuvC from Dehalococcoides mccartyi (strain ATCC BAA-2266 / KCTC 15142 / 195) (Dehalococcoides ethenogenes (strain 195)).